The sequence spans 141 residues: HTH-type transcriptional repressor NsrR (141 aa).

Positions 2–129 constitute an HTH rrf2-type domain; the sequence is QLTNFTDFGL…DKHTIQDMLT (128 aa). The H-T-H motif DNA-binding region spans 28-51; it reads ITVVTETFDVSRNHMVKIINKLGQ. [2Fe-2S] cluster is bound by residues C91, C96, and C102.

Requires [2Fe-2S] cluster as cofactor.

Nitric oxide-sensitive repressor of genes involved in protecting the cell against nitrosative stress. May require iron for activity. This chain is HTH-type transcriptional repressor NsrR, found in Aliivibrio fischeri (strain ATCC 700601 / ES114) (Vibrio fischeri).